Consider the following 1426-residue polypeptide: ABC transporter G family member 31 (1426 aa).

An ABC transporter 1 domain is found at 142-415; sequence LRHLRIYRGG…FAGMGFRCPE (274 aa). 175 to 182 contacts ATP; it reads GPPSSGKT. Residues 493–706 enclose the ABC transmembrane type-2 1 domain; sequence ELLKSNFQWQ…AQNAISVNEF (214 aa). Transmembrane regions (helical) follow at residues 511-531, 544-564, 592-612, 630-650, 655-675, 681-701, and 741-761; these read FIYV…MTVF, GIIY…NGFT, LPSW…WVLV, FLLL…MASL, IVAN…GGFI, IPAW…QNAI, and IGVG…TLFL. An ABC transporter 2 domain is found at 824–1076; that stretch reads MCFKNINYYV…NLVEFFEAIP (253 aa). 869 to 876 is a binding site for ATP; the sequence is GVSGAGKT. Residues 1149–1363 form the ABC transmembrane type-2 2 domain; the sequence is AQYAACLWKQ…TLYGLLTSQF (215 aa). The next 7 membrane-spanning stretches (helical) occupy residues 1168 to 1188, 1200 to 1220, 1245 to 1265, 1283 to 1303, 1313 to 1333, 1341 to 1363, and 1398 to 1418; these read YTAV…TICW, IFNA…TNAT, LPFA…QSLI, FLWY…YGMM, VAPI…GFMI, WWRW…TSQF, and VVAG…ALAI.

The protein belongs to the ABC transporter superfamily. ABCG family. PDR (TC 3.A.1.205) subfamily.

The protein localises to the membrane. Functionally, may be a general defense protein. This Oryza sativa subsp. japonica (Rice) protein is ABC transporter G family member 31.